Here is a 99-residue protein sequence, read N- to C-terminus: Acylphosphatase (99 aa).

In terms of domain architecture, Acylphosphatase-like spans 14–99 (AVDVTVTGRV…DQGLRSFGVR (86 aa)). Active-site residues include R29 and N47.

It belongs to the acylphosphatase family.

It carries out the reaction an acyl phosphate + H2O = a carboxylate + phosphate + H(+). The chain is Acylphosphatase (acyP) from Nocardioides sp. (strain ATCC BAA-499 / JS614).